Reading from the N-terminus, the 82-residue chain is RNA-binding protein Hfq (82 aa).

A Sm domain is found at 10-70 (DLFLNTVRKS…ISTIMPSQPV (61 aa)).

Belongs to the Hfq family. In terms of assembly, homohexamer.

In terms of biological role, RNA chaperone that binds small regulatory RNA (sRNAs) and mRNAs to facilitate mRNA translational regulation in response to envelope stress, environmental stress and changes in metabolite concentrations. Also binds with high specificity to tRNAs. The chain is RNA-binding protein Hfq from Chelativorans sp. (strain BNC1).